Reading from the N-terminus, the 256-residue chain is Putative ankyrin repeat protein FPV231 (256 aa).

ANK repeat units follow at residues 1-20 (MFGN…RIDS), 24-53 (EECL…DTNI), 57-86 (YNRS…DYNL), 90-119 (HGYT…DPNI), and 123-151 (EKHT…DINI).

This Vertebrata (FPV) protein is Putative ankyrin repeat protein FPV231.